A 620-amino-acid polypeptide reads, in one-letter code: Glutathione-regulated potassium-efflux system protein KefC (620 aa).

The next 12 helical transmembrane spans lie at 4–24, 26–46, 54–74, 90–110, 114–134, 149–169, 178–198, 218–238, 270–290, 294–314, 327–347, and 359–379; these read HTLV…PIAV, LGLG…LWGL, SILH…GLEL, GALQ…LLGL, VAEL…MQAM, FAVL…IPLL, MGAF…VVLL, VFSA…EEVG, GLLL…GTLI, LRIV…LWLI, WFAV…GAAQ, and SLTL…VILN. The region spanning 399–518 is the RCK N-terminal domain; that stretch reads QPRVIIAGFG…AGVEKPERET (120 aa). Residues 597-620 form a disordered region; the sequence is GWQGTEEGKHTGNMADEPETKPSS.

Belongs to the monovalent cation:proton antiporter 2 (CPA2) transporter (TC 2.A.37) family. KefC subfamily. As to quaternary structure, homodimer. Interacts with the regulatory subunit KefF.

Its subcellular location is the cell inner membrane. In terms of biological role, pore-forming subunit of a potassium efflux system that confers protection against electrophiles. Catalyzes K(+)/H(+) antiport. This chain is Glutathione-regulated potassium-efflux system protein KefC, found in Shigella flexneri serotype 5b (strain 8401).